A 415-amino-acid chain; its full sequence is Lipoyl synthase, apicoplast (415 aa).

An N-terminal signal peptide occupies residues 1–23 (MHFGIPSLFYLYILFSIIMRIKC). [4Fe-4S] cluster contacts are provided by Cys-153, Cys-158, Cys-164, Cys-179, Cys-183, Cys-186, and Ser-394. The 219-residue stretch at 165–383 (WNIGTATIML…KEEGLKMGFK (219 aa)) folds into the Radical SAM core domain.

The protein belongs to the radical SAM superfamily. Lipoyl synthase family. The cofactor is [4Fe-4S] cluster.

The protein resides in the plastid. Its subcellular location is the apicoplast. The catalysed reaction is [[Fe-S] cluster scaffold protein carrying a second [4Fe-4S](2+) cluster] + N(6)-octanoyl-L-lysyl-[protein] + 2 oxidized [2Fe-2S]-[ferredoxin] + 2 S-adenosyl-L-methionine + 4 H(+) = [[Fe-S] cluster scaffold protein] + N(6)-[(R)-dihydrolipoyl]-L-lysyl-[protein] + 4 Fe(3+) + 2 hydrogen sulfide + 2 5'-deoxyadenosine + 2 L-methionine + 2 reduced [2Fe-2S]-[ferredoxin]. It participates in protein modification; protein lipoylation via endogenous pathway; protein N(6)-(lipoyl)lysine from octanoyl-[acyl-carrier-protein]: step 2/2. Its function is as follows. Catalyzes the radical-mediated insertion of two sulfur atoms into the C-6 and C-8 positions of the octanoyl moiety bound to the lipoyl domains of lipoate-dependent enzymes, thereby converting the octanoylated domains into lipoylated derivatives. In Plasmodium falciparum (isolate 3D7), this protein is Lipoyl synthase, apicoplast.